A 356-amino-acid polypeptide reads, in one-letter code: tRNA N6-adenosine threonylcarbamoyltransferase (356 aa).

Positions 115 and 119 each coordinate Fe cation. Substrate is bound by residues 138 to 142, aspartate 171, glycine 184, and asparagine 283; that span reads LVSGG. Aspartate 311 is a Fe cation binding site.

It belongs to the KAE1 / TsaD family. Fe(2+) serves as cofactor.

It localises to the cytoplasm. The catalysed reaction is L-threonylcarbamoyladenylate + adenosine(37) in tRNA = N(6)-L-threonylcarbamoyladenosine(37) in tRNA + AMP + H(+). In terms of biological role, required for the formation of a threonylcarbamoyl group on adenosine at position 37 (t(6)A37) in tRNAs that read codons beginning with adenine. Is involved in the transfer of the threonylcarbamoyl moiety of threonylcarbamoyl-AMP (TC-AMP) to the N6 group of A37, together with TsaE and TsaB. TsaD likely plays a direct catalytic role in this reaction. The sequence is that of tRNA N6-adenosine threonylcarbamoyltransferase from Prochlorococcus marinus (strain AS9601).